A 401-amino-acid chain; its full sequence is Nicotinate phosphoribosyltransferase (401 aa).

His-224 bears the Phosphohistidine; by autocatalysis mark.

The protein belongs to the NAPRTase family. Post-translationally, transiently phosphorylated on a His residue during the reaction cycle. Phosphorylation strongly increases the affinity for substrates and increases the rate of nicotinate D-ribonucleotide production. Dephosphorylation regenerates the low-affinity form of the enzyme, leading to product release.

It carries out the reaction nicotinate + 5-phospho-alpha-D-ribose 1-diphosphate + ATP + H2O = nicotinate beta-D-ribonucleotide + ADP + phosphate + diphosphate. Its pathway is cofactor biosynthesis; NAD(+) biosynthesis; nicotinate D-ribonucleotide from nicotinate: step 1/1. Catalyzes the synthesis of beta-nicotinate D-ribonucleotide from nicotinate and 5-phospho-D-ribose 1-phosphate at the expense of ATP. The sequence is that of Nicotinate phosphoribosyltransferase from Pseudomonas putida (strain GB-1).